A 633-amino-acid chain; its full sequence is Endosomal/prevacuolar sodium/hydrogen exchanger (633 aa).

A signal peptide spans 1–21 (MLSKVLLNIAFKVLLTTAKRA). Over 22–61 (VDPDDDDELLPSPDLPGSDDPIAGDPDVDLNPVTEEMFSS) the chain is Lumenal. The interval 25–44 (DDDDELLPSPDLPGSDDPIA) is disordered. Residues 31–42 (LPSPDLPGSDDP) are compositionally biased toward low complexity. The chain crosses the membrane as a helical span at residues 62 to 82 (WALFIMLLLLISALWSSYYLT). Over 83–85 (QKR) the chain is Cytoplasmic. The chain crosses the membrane as a helical span at residues 86–106 (IRAVHETVLSIFYGMVIGLII). The Lumenal portion of the chain corresponds to 107–117 (RMSPGHYIQDT). The helical transmembrane segment at 118 to 138 (VTFNSSYFFNVLLPPIILNSG) threads the bilayer. An Amiloride-binding motif is present at residues 124–133 (YFFNVLLPPI). The Cytoplasmic segment spans residues 139–152 (YELNQVNFFNNMLS). The helical transmembrane segment at 153–173 (ILIFAIPGTFISAVVIGIILY) threads the bilayer. Residues 174–189 (IWTFLGLESIDISFAD) lie on the Lumenal side of the membrane. The chain crosses the membrane as a helical span at residues 190–211 (AMSVGATLSATDPVTILSIFNA). The Cytoplasmic segment spans residues 212-217 (YKVDPK). Residues 218–238 (LYTIIFGESLLNDAISIVMFE) traverse the membrane as a helical segment. The Lumenal portion of the chain corresponds to 239–258 (TCQKFHGQPATFSSVFEGAG). Residues 259 to 279 (LFLMTFSVSLLIGVLIGILVA) form a helical membrane-spanning segment. The Cytoplasmic portion of the chain corresponds to 280–288 (LLLKHTHIR). The chain crosses the membrane as a helical span at residues 289–308 (RYPQIESCLILLIAYESYFF). The Lumenal portion of the chain corresponds to 309–313 (SNGCH). Residues 314–333 (MSGIVSLLFCGITLKHYAYY) form a helical membrane-spanning segment. The Cytoplasmic portion of the chain corresponds to 334 to 344 (NMSRRSQITIK). Residues 345-364 (YIFQLLARLSENFIFIYLGL) form a helical membrane-spanning segment. The Cytoplasmic segment spans residues 365 to 376 (ELFTEVELVYKP). Residues 377–397 (LLIIVAAISICVARWCAVFPL) traverse the membrane as a helical segment. At 398 to 431 (SQFVNWIYRVKTIRSMSGITGENISVPDEIPYNY) the chain is on the lumenal side. N-linked (GlcNAc...) asparagine glycosylation is present at N420. A helical membrane pass occupies residues 432 to 452 (QMMTFWAGLRGAVGVALALGI). Topologically, residues 453 to 457 (QGEYK) are cytoplasmic. The helical transmembrane segment at 458–478 (FTLLATVLVVVVLTVIIFGGT) threads the bilayer. Phosphothreonine is present on T490. The residue at position 494 (S494) is a Phosphoserine. T498 carries the post-translational modification Phosphothreonine. Position 499 is a phosphoserine (S499). Residues N515, N550, and N563 are each glycosylated (N-linked (GlcNAc...) asparagine). Residues 553–578 (TTGGNTFGGLNETENTSPNPARSSMD) are disordered. Residues 564-574 (ETENTSPNPAR) show a composition bias toward polar residues. S569 bears the Phosphoserine mark.

This sequence belongs to the monovalent cation:proton antiporter 1 (CPA1) transporter (TC 2.A.36) family. In terms of assembly, interacts with CYP6.

The protein resides in the endosome membrane. It localises to the prevacuolar compartment membrane. Endosomal/prevacuolar electroneutral Na(+)/H(+) exchanger which mediates intracellular sequestration of Na(+) cations, regulates vacuolar pH and contributes to osmotolerance following sudden exposure to hyperosmotic media. Also contributes to the postdiauxic/stationary phase resistance to osmotic stress and allows for the continued growth of cells until the acquired osmotolerance response can occur. Involved in hygromycin resistance probably through its influence on the electrochemical proton gradient affecting secondarily the entrance of hygromycin. Mediates pH-dependent vesicle trafficking out of the endosome. Contributes to K(+) sequestration and homeostasis. This chain is Endosomal/prevacuolar sodium/hydrogen exchanger (NHX1), found in Saccharomyces cerevisiae (strain ATCC 204508 / S288c) (Baker's yeast).